The following is a 326-amino-acid chain: ATP synthase gamma chain (326 aa).

The protein belongs to the ATPase gamma chain family. As to quaternary structure, F-type ATPases have 2 components, CF(1) - the catalytic core - and CF(0) - the membrane proton channel. CF(1) has five subunits: alpha(3), beta(3), gamma(1), delta(1), epsilon(1). CF(0) has three main subunits: a, b and c.

Its subcellular location is the cell membrane. Produces ATP from ADP in the presence of a proton gradient across the membrane. The gamma chain is believed to be important in regulating ATPase activity and the flow of protons through the CF(0) complex. The protein is ATP synthase gamma chain of Corynebacterium jeikeium (strain K411).